Reading from the N-terminus, the 532-residue chain is MTTEITRPPAPPSRPSESRKPSLPGLLHLVAIAAVLATIVSAWAIDFVPTALIDGSDNIVALLQRMIPPRLDDPARIGMLAVETLLMAVLGTTLAAIASVPLAFLAARNTTPHPAVQAVARAVITFCRAMPDLLFAVLFVRALGIGVLPGVLALALHSIGMLGKVFADAIEQTDAGPREAVRSTGVGYFRELLNAVVPQVVPSWIAMFVYRIDINLRMSVVLGFVGAGGIGFALQDALRGLIYPRALGIVCVILVIIAGMELLAIAIRRILLDPSRSNPLRDRIARFGLSGVLVGSCVAAFVLLKINPLALFTWVFPSVGIFTRMVPPNFDALGVDLFTAAAQTVAIGVVATAIGIALSIPAGILAARNVSPHPALYWPARAWILVVRAVPELILAVVFVAALGLGPIAGTCALAIGSIGFLAKLVADAVEEIDPGPMEAVRSVGGGWWKTLFAAVLPQSMPALVGSSLYLFDVNVRTSTILGIVGAGGVGYLLFESIRTLNFDVAGAIVIVIFVIVYAIERLSGWIRSRLV.

The tract at residues 1–20 (MTTEITRPPAPPSRPSESRK) is disordered. 12 consecutive transmembrane segments (helical) span residues 23-45 (LPGLLHLVAIAAVLATIVSAWAI), 85-107 (LLMAVLGTTLAAIASVPLAFLAA), 134-156 (LFAVLFVRALGIGVLPGVLALAL), 187-209 (GYFRELLNAVVPQVVPSWIAMFV), 216-235 (LRMSVVLGFVGAGGIGFALQ), 245-267 (RALGIVCVILVIIAGMELLAIAI), 287-304 (FGLSGVLVGSCVAAFVLL), 345-367 (VAIGVVATAIGIALSIPAGILAA), 395-417 (LAVVFVAALGLGPIAGTCALAIG), 452-471 (LFAAVLPQSMPALVGSSLYL), 478-495 (TSTILGIVGAGGVGYLLF), and 505-527 (VAGAIVIVIFVIVYAIERLSGWI). In terms of domain architecture, ABC transmembrane type-1 1 spans 81–264 (AVETLLMAVL…VIIAGMELLA (184 aa)). In terms of domain architecture, ABC transmembrane type-1 2 spans 341–524 (AAQTVAIGVV…VIVYAIERLS (184 aa)).

It belongs to the binding-protein-dependent transport system permease family. The complex is composed of two ATP-binding proteins (PhnC), two transmembrane proteins (PhnE) and a solute-binding protein (PhnD).

The protein localises to the cell membrane. In terms of biological role, part of the ABC transporter complex PhnCDE involved in phosphate import. Responsible for the translocation of the substrate across the membrane. The sequence is that of Phosphate-import permease protein PhnE (phnE) from Mycolicibacterium smegmatis (strain ATCC 700084 / mc(2)155) (Mycobacterium smegmatis).